The sequence spans 153 residues: Cystatin-9 (153 aa).

Positions 1–27 (MGRQRRCRWAQPWTLLLLLLGPRLLVT) are cleaved as a signal peptide.

Belongs to the cystatin family.

The protein resides in the secreted. May play a role in hematopoietic differentiation or inflammation. This is Cystatin-9 (CST9) from Bos taurus (Bovine).